A 1239-amino-acid polypeptide reads, in one-letter code: Codanin-1 (1239 aa).

A2 bears the N-acetylalanine mark. Residues 61–72 (SRVLPQGPSTPA) show a composition bias toward polar residues. Disordered regions lie at residues 61–249 (SRVL…PPGC) and 261–299 (KARTKQLQQSPTPASPIPESGSPVPSRTGNLTAEPADPA). A Phosphothreonine modification is found at T70. 3 stretches are compositionally biased toward low complexity: residues 77-88 (ASAALPARQGAP), 95-116 (ARSQLFPAAEPLSAAAEAPLAR), and 138-179 (GAAE…LSNL). The segment at 193–213 (AGRTKPSRRINPTPVSEERSL) is interaction with ASF1A/B. The segment covering 219 to 238 (CFTSPPISCVPSSQPSTLDT) has biased composition (polar residues). S270 bears the Phosphoserine mark. Transmembrane regions (helical) follow at residues 317 to 337 (CIAENLVPNLFLELFFVLQLL) and 631 to 651 (FAVVLLSLRLLAKFLGFVAFL).

Interacts with ASF1A and ASF1B. Found in a cytosolic complex with ASF1A, ASF1B, IPO4 and histones H3.1 and H4. Widely expressed in adult mice, the highest levels can be measured in erythropoietic cells.

It is found in the cytoplasm. Its subcellular location is the nucleus. The protein localises to the membrane. Functionally, may act as a negative regulator of ASF1 in chromatin assembly. This is Codanin-1 (Cdan1) from Mus musculus (Mouse).